A 145-amino-acid polypeptide reads, in one-letter code: ATP synthase epsilon chain (145 aa).

Over residues 93 to 104 (AEAEKARARAQE) the composition is skewed to basic and acidic residues. A disordered region spans residues 93–113 (AEAEKARARAQEALKNPDASK).

It belongs to the ATPase epsilon chain family. As to quaternary structure, F-type ATPases have 2 components, CF(1) - the catalytic core - and CF(0) - the membrane proton channel. CF(1) has five subunits: alpha(3), beta(3), gamma(1), delta(1), epsilon(1). CF(0) has three main subunits: a, b and c.

The protein localises to the cell inner membrane. In terms of biological role, produces ATP from ADP in the presence of a proton gradient across the membrane. The polypeptide is ATP synthase epsilon chain (Francisella philomiragia subsp. philomiragia (strain ATCC 25017 / CCUG 19701 / FSC 153 / O#319-036)).